The sequence spans 458 residues: LysM domain-containing protein ARB_05157 (458 aa).

An N-terminal signal peptide occupies residues 1-19 (MVSLKVCFLLLASSELAFG). Residues 157-203 (AFHLVKQGEDCGTISATYGITSAQFLAWNPSAGKDCTGLWANAYACV) enclose the LysM 1 domain. The disordered stretch occupies residues 210-232 (PPKTTSQAPQPTPTKPSNGIETP). A compositionally biased stretch (polar residues) spans 212 to 229 (KTTSQAPQPTPTKPSNGI). LysM domains follow at residues 245-291 (KFHL…YACV), 325-371 (KFYL…YSCV), and 409-455 (KFHF…YLCV).

The protein localises to the secreted. In terms of biological role, might have a role in sequestration of chitin oligosaccharides (breakdown products of fungal cell walls that are released during invasion and act as triggers of host immunity) to dampen host defense. The protein is LysM domain-containing protein ARB_05157 of Arthroderma benhamiae (strain ATCC MYA-4681 / CBS 112371) (Trichophyton mentagrophytes).